The sequence spans 356 residues: MGLLRIMMPPKLQLLAVVAFAVAMLFLENQIQKLEESRSKLERAIARHEVREIEQRHTMDGPRQDATLDEEEDMVIIYNRVPKTASTSFTNIAYDLCAKNKYHVLHINTTKNNPVMSLQDQMRFVKNITSWKEMKPGFYHGHVSYLDFAKFGVKKKPIYINVIRDPIERLVSYYYFLRFGDDYRPGLRRRKQGDKKTFDECVAEGGSDCAPEKLWLQIPFFCGHSSECWNVGSRWAMDQAKYNLINEYFLVGVTEELEDFIMLLEAALPRFFRGATELYRTGKKSHLRKTTEKKLPTKQTIAKLQQSDIWKMENEFYEFALEQFQFIRAHAVREKDGDLYILAQNFFYEKIYPKSN.

Over 1 to 11 the chain is Cytoplasmic; the sequence is MGLLRIMMPPK. Residues 12 to 28 traverse the membrane as a helical; Signal-anchor for type II membrane protein segment; the sequence is LQLLAVVAFAVAMLFLE. A coiled-coil region spans residues 24-51; that stretch reads MLFLENQIQKLEESRSKLERAIARHEVR. The Lumenal segment spans residues 29 to 356; it reads NQIQKLEESR…FYEKIYPKSN (328 aa). Positions 83, 84, 85, 86, 87, and 88 each coordinate adenosine 3',5'-bisphosphate. 2 N-linked (GlcNAc...) asparagine glycosylation sites follow: Asn-108 and Asn-127. Residues His-140 and His-142 contribute to the active site. Adenosine 3',5'-bisphosphate-binding residues include Arg-164 and Ser-172. Intrachain disulfides connect Cys-201–Cys-209 and Cys-222–Cys-228. Residues Tyr-279, Ser-285, Thr-290, and Lys-293 each contribute to the adenosine 3',5'-bisphosphate site.

It belongs to the sulfotransferase 3 family. In terms of assembly, homotrimer. Interacts with the C5-epimerase GLCE. Post-translationally, N-glycosylated.

Its subcellular location is the golgi apparatus membrane. Its function is as follows. Catalyzes the transfer of a sulfo group from 3'-phospho-5'-adenylyl sulfate (PAPS) to the 2-OH position of iduronic acid (IdoA) or glucuronic acid (GlcA) within the heparan sulfate (HS) chain and participates in HS biosynthesis. Required for metanephric development of kidney formation, suggesting that 2-O-sulfation within HS is essential for signaling between ureteric bud and metanephric mesenchyme. In Pongo abelii (Sumatran orangutan), this protein is Heparan sulfate 2-O-sulfotransferase 1.